The chain runs to 350 residues: Protein disulfide isomerase Creld2 (350 aa).

Positions 1-22 (MHLLLAAAFGLLLLLPPPGAVA) are cleaved as a signal peptide. The CXXC signature appears at 29-32 (CQRC). 4 cysteine pairs are disulfide-bonded: C29–C32, C138–C152, C146–C164, and C166–C175. Residues 134 to 176 (DCQECQGGSERPCSGNGYCSGDGSRQGDGSCQCHTGYKGPLCI) enclose the EGF-like 1 domain. The FU 1 repeat unit spans residues 191 to 238 (HSICSACDESCKTCSGPSNKDCIQCEVGWARVEDACVDVDECAAETSP). N-linked (GlcNAc...) asparagine glycosylation is present at N249. Residues 251-298 (SYTCEDCDSTCVGCTGKGPANCKECIAGYTKESGQCTDIDECSLEEKA) form an FU 2 repeat. A CXXC motif is present at residues 261–264 (CVGC). 4 cysteine pairs are disulfide-bonded: C261/C264, C292/C306, C299/C315, and C317/C328. Residues 288–329 (DIDECSLEEKACKRKNENCYNVPGSFVCVCPEGFEETEDACV) enclose the EGF-like 2; calcium-binding domain.

It belongs to the CRELD family. Interacts with CHRNA4. Component of a complex containing at least CRELD2, MANF, MATN3 and PDIA4. As to expression, expressed in chondrocytes (at protein level).

The protein localises to the endoplasmic reticulum. The catalysed reaction is Catalyzes the rearrangement of -S-S- bonds in proteins.. Functionally, protein disulfide isomerase. Might play a role in the unfolded protein response. May regulate transport of alpha4-beta2 neuronal acetylcholine receptor. This Mus musculus (Mouse) protein is Protein disulfide isomerase Creld2 (Creld2).